The following is a 142-amino-acid chain: Snaclec GPIB-binding protein subunit alpha (142 aa).

3 disulfides stabilise this stretch: Cys6/Cys17, Cys39/Cys136, and Cys111/Cys128. The C-type lectin domain maps to 13–137 (HRQYCYKFFQ…CVEGNPFVCK (125 aa)).

It belongs to the snaclec family. Heterodimer of subunits alpha and beta; disulfide-linked. As to expression, expressed by the venom gland.

It localises to the secreted. Functionally, binds to platelet GPIb (subunit alpha) (GP1BA) and functions as a receptor blocker for vWF binding to GPIb. The platelet GPIb-binding site resides on the GPIB-BP subunit beta and not on the alpha subunit. At a final concentration of 104 nM totally abolishes vWF-dependent shear-induced platelet aggregation (SIPA) at a high shear stress, but had no effect on SIPA at a low shear stress. This is Snaclec GPIB-binding protein subunit alpha from Bothrops jararaca (Jararaca).